A 91-amino-acid chain; its full sequence is YcgL domain-containing protein Sde_1339 (91 aa).

Positions 1–85 (MIVDIYRSAK…PPESYMNEIP (85 aa)) constitute a YcgL domain. A disordered region spans residues 72-91 (QMPPPPESYMNEIPNDKMPR).

This is YcgL domain-containing protein Sde_1339 from Saccharophagus degradans (strain 2-40 / ATCC 43961 / DSM 17024).